Here is a 400-residue protein sequence, read N- to C-terminus: MGGWSSKPRKGMGTNLAVPNPLGFFPDHQLDPAFKANSDNPDWDLNPHKDNWPDANKVGVGAFGPGFTPPHGGLLGWSPQAQGLLTTVPAAPPPASTSRQSGRQPTPLSPPLRDTHPQAMQWNSTTFHQTLQDPRVRALYFPAGGSSSGTVSPAQNTVSAISSTLSKTGDPVPNMENISSGLLGPLLVLQAGFFLLTKILTIPQSLDSWWTSLNFLGQTPVCLGQNSQSQISSHSLTCCPPICPGYRWMCLRRFIIFLCILLLCLIFLLVLLDCQGMLPVCPLIPGSSTTSTGPCKTCTTPAQGTSMFPSCCCTKPTDGNCTCIPIPSSWAFAKFLWEWASVRFSWLSLLVPFVQWFVGLSPTVWLSVIWMMWFWGPSLCNILSPFMPLLPIFFCLWVYI.

The residue at position 1 (methionine 1) is an N-acetylmethionine. Glycine 2 carries N-myristoyl glycine; by host lipidation. Positions 2–119 (GGWSSKPRKG…PPLRDTHPQA (118 aa)) are pre-S1. Positions 2–174 (GGWSSKPRKG…LSKTGDPVPN (173 aa)) are pre-S. The Virion surface; in external conformation segment spans residues 2 to 181 (GGWSSKPRKG…VPNMENISSG (180 aa)). Over 2–253 (GGWSSKPRKG…PGYRWMCLRR (252 aa)) the chain is Intravirion; in internal conformation. Tryptophan 4 carries N-linked (GlcNAc...) asparagine glycosylation. Disordered regions lie at residues 29-50 (QLDP…PHKD) and 85-118 (LTTV…THPQ). Polar residues predominate over residues 96–106 (STSRQSGRQPT). Residues 120–174 (MQWNSTTFHQTLQDPRVRALYFPAGGSSSGTVSPAQNTVSAISSTLSKTGDPVPN) form a pre-S2 region. A helical transmembrane segment spans residues 182 to 202 (LLGPLLVLQAGFFLLTKILTI). Residues 203 to 253 (PQSLDSWWTSLNFLGQTPVCLGQNSQSQISSHSLTCCPPICPGYRWMCLRR) are Intravirion; in external conformation-facing. The helical transmembrane segment at 254–274 (FIIFLCILLLCLIFLLVLLDC) threads the bilayer. Topologically, residues 275-348 (QGMLPVCPLI…WASVRFSWLS (74 aa)) are virion surface. An N-linked (GlcNAc...) asparagine; by host glycan is attached at asparagine 320. Residues 349–369 (LLVPFVQWFVGLSPTVWLSVI) form a helical membrane-spanning segment. Topologically, residues 370–375 (WMMWFW) are intravirion. Residues 376-398 (GPSLCNILSPFMPLLPIFFCLWV) traverse the membrane as a helical segment. The Virion surface portion of the chain corresponds to 399-400 (YI).

The protein belongs to the orthohepadnavirus major surface antigen family. Interacts (via its myristoylated pre-S1 region) with the host SLC10A1/NTCP; this interaction is essential for viral entry. As to quaternary structure, in its internal form (Li-HBsAg), interacts with the capsid protein and with the isoform S. Interacts with host chaperone CANX. In terms of assembly, associates with host chaperone CANX through its pre-S2 N glycan; this association may be essential for isoform M proper secretion. Interacts with isoform L. Interacts with the antigens of satellite virus HDV (HDVAgs); this interaction is required for encapsidation of HDV genomic RNA. Isoform M is N-terminally acetylated by host at a ratio of 90%, and N-glycosylated by host at the pre-S2 region. Post-translationally, myristoylated; this modification is essential for its interaction with the host protein SLC10A1/NTCP.

It localises to the virion membrane. Functionally, the large envelope protein exists in two topological conformations, one which is termed 'external' or Le-HBsAg and the other 'internal' or Li-HBsAg. In its external conformation the protein attaches the virus to cell receptors and thereby initiating infection. This interaction determines the species specificity and liver tropism. This attachment induces virion internalization predominantly through caveolin-mediated endocytosis. The large envelope protein also assures fusion between virion membrane and endosomal membrane. In its internal conformation the protein plays a role in virion morphogenesis and mediates the contact with the nucleocapsid like a matrix protein. The middle envelope protein plays an important role in the budding of the virion. It is involved in the induction of budding in a nucleocapsid independent way. In this process the majority of envelope proteins bud to form subviral lipoprotein particles of 22 nm of diameter that do not contain a nucleocapsid. This is Large envelope protein from Homo sapiens (Human).